Consider the following 876-residue polypeptide: Valine--tRNA ligase (876 aa).

Residues 44–54 (PNVTGKLHLGH) carry the 'HIGH' region motif. Positions 520-524 (KMSKS) match the 'KMSKS' region motif. ATP is bound at residue Lys523. Residues 805–876 (LEGLIDMDKE…VKNRIEQLKA (72 aa)) are a coiled coil.

The protein belongs to the class-I aminoacyl-tRNA synthetase family. ValS type 1 subfamily. As to quaternary structure, monomer.

It localises to the cytoplasm. The enzyme catalyses tRNA(Val) + L-valine + ATP = L-valyl-tRNA(Val) + AMP + diphosphate. Its function is as follows. Catalyzes the attachment of valine to tRNA(Val). As ValRS can inadvertently accommodate and process structurally similar amino acids such as threonine, to avoid such errors, it has a 'posttransfer' editing activity that hydrolyzes mischarged Thr-tRNA(Val) in a tRNA-dependent manner. The sequence is that of Valine--tRNA ligase from Staphylococcus haemolyticus (strain JCSC1435).